The primary structure comprises 105 residues: uncharacterized protein (105 aa).

The span at 1 to 11 (MPHRNDRRKSA) shows a compositional bias: basic residues. A disordered region spans residues 1–20 (MPHRNDRRKSASKAPNAIIH).

This sequence belongs to the ALB1 family.

It localises to the nucleus. It is found in the nucleolus. This is an uncharacterized protein from Schizosaccharomyces pombe (strain 972 / ATCC 24843) (Fission yeast).